The chain runs to 82 residues: Small ribosomal subunit protein bS20 (82 aa).

Positions 1–29 (MPNIKSAKKDLRRSRAAAVRNRAQRSALR) are disordered. Positions 16–29 (AAAVRNRAQRSALR) are enriched in low complexity.

The protein belongs to the bacterial ribosomal protein bS20 family.

Binds directly to 16S ribosomal RNA. This chain is Small ribosomal subunit protein bS20, found in Gemmatimonas aurantiaca (strain DSM 14586 / JCM 11422 / NBRC 100505 / T-27).